The sequence spans 171 residues: Small ribosomal subunit protein uS5 (171 aa).

Positions Tyr-14–Val-77 constitute an S5 DRBM domain.

This sequence belongs to the universal ribosomal protein uS5 family. Part of the 30S ribosomal subunit. Contacts proteins S4 and S8.

Functionally, with S4 and S12 plays an important role in translational accuracy. Its function is as follows. Located at the back of the 30S subunit body where it stabilizes the conformation of the head with respect to the body. This is Small ribosomal subunit protein uS5 from Vesicomyosocius okutanii subsp. Calyptogena okutanii (strain HA).